The chain runs to 615 residues: DNA mismatch repair protein MutL (615 aa).

The disordered stretch occupies residues 363–397 (FAEPAAREPVAPRYTPAPASGSRPAAPWPNAQPGY). The span at 364–391 (AEPAAREPVAPRYTPAPASGSRPAAPWP) shows a compositional bias: low complexity.

This sequence belongs to the DNA mismatch repair MutL/HexB family.

Its function is as follows. This protein is involved in the repair of mismatches in DNA. It is required for dam-dependent methyl-directed DNA mismatch repair. May act as a 'molecular matchmaker', a protein that promotes the formation of a stable complex between two or more DNA-binding proteins in an ATP-dependent manner without itself being part of a final effector complex. The protein is DNA mismatch repair protein MutL of Shigella boydii serotype 18 (strain CDC 3083-94 / BS512).